The chain runs to 287 residues: Nucleotide-binding protein HEAR2885 (287 aa).

Residue 8 to 15 (GISGSGKS) participates in ATP binding. GTP is bound at residue 57 to 60 (DVRS).

This sequence belongs to the RapZ-like family.

Functionally, displays ATPase and GTPase activities. This is Nucleotide-binding protein HEAR2885 from Herminiimonas arsenicoxydans.